The chain runs to 135 residues: Transcriptional regulator HosA (135 aa).

In terms of domain architecture, HTH marR-type spans 4-134; sequence RNKAFHQLRQ…FVQLVRKMMN (131 aa). A DNA-binding region (H-T-H motif) is located at residues 48-71; the sequence is QVALIEAAVSTKATLAEMLARMEN.

Functionally, involved in the temperature-dependent positive control of flagellum-driven swimming motility and cellular aggregation. Regulates fliC expression by directly interacting with fliC promoter. This is Transcriptional regulator HosA (hosA) from Escherichia coli O157:H7.